Reading from the N-terminus, the 317-residue chain is 2,3-dihydroxyphenylpropionate/2,3-dihydroxicinnamic acid 1,2-dioxygenase (317 aa).

His115 (proton donor) is an active-site residue. Catalysis depends on His179, which acts as the Proton acceptor.

It belongs to the LigB/MhpB extradiol dioxygenase family. Homotetramer. The cofactor is Fe(2+).

It catalyses the reaction 3-(2,3-dihydroxyphenyl)propanoate + O2 = (2Z,4E)-2-hydroxy-6-oxonona-2,4-dienedioate + H(+). The enzyme catalyses (2E)-3-(2,3-dihydroxyphenyl)prop-2-enoate + O2 = (2Z,4E,7E)-2-hydroxy-6-oxonona-2,4,7-trienedioate + H(+). It participates in aromatic compound metabolism; 3-phenylpropanoate degradation. Catalyzes the non-heme iron(II)-dependent oxidative cleavage of 2,3-dihydroxyphenylpropionic acid and 2,3-dihydroxicinnamic acid into 2-hydroxy-6-ketononadienedioate and 2-hydroxy-6-ketononatrienedioate, respectively. The polypeptide is 2,3-dihydroxyphenylpropionate/2,3-dihydroxicinnamic acid 1,2-dioxygenase (Paraburkholderia phymatum (strain DSM 17167 / CIP 108236 / LMG 21445 / STM815) (Burkholderia phymatum)).